We begin with the raw amino-acid sequence, 755 residues long: Serine/threonine-protein kinase GL21140 (755 aa).

Positions glutamine 18–lysine 52 are enriched in low complexity. The segment at glutamine 18–serine 128 is disordered. 2 stretches are compositionally biased toward basic and acidic residues: residues alanine 53–aspartate 66 and glutamate 74–aspartate 84. The segment covering glycine 87–asparagine 99 has biased composition (polar residues). Over residues glycine 100 to serine 128 the composition is skewed to low complexity. Doublecortin domains lie at histidine 157–asparagine 243 and arginine 314–phenylalanine 397. The region spanning tyrosine 484–threonine 742 is the Protein kinase domain. Residues isoleucine 490–valine 498 and lysine 513 contribute to the ATP site. Residue aspartate 605 is the Proton acceptor of the active site.

The protein belongs to the protein kinase superfamily. CAMK Ser/Thr protein kinase family. CaMK subfamily.

The catalysed reaction is L-seryl-[protein] + ATP = O-phospho-L-seryl-[protein] + ADP + H(+). The enzyme catalyses L-threonyl-[protein] + ATP = O-phospho-L-threonyl-[protein] + ADP + H(+). The polypeptide is Serine/threonine-protein kinase GL21140 (Drosophila persimilis (Fruit fly)).